The primary structure comprises 590 residues: MSVDSSSTHRHRSVAARLVRLAAAGAAVIAAVGTAAAWAHAGAVQHRCIHDAMQARVRQSVARHHTAPGAVSAVGLSYVTLGAAPTVVRAANWGALRIAVSTEDLTDSAYHCARVGQRISTRDGRFAICTAEDILTDEKRDILVKYLIPQALQLHTERLKVRQVQDKWKVTGMGNEICGHFKVPPAHITDGLSNTDFVMYVASVPSEGDVLAWATTCQVFSDGHPAVGVINIPAANIASRYDQLVTRVVTHEMAHALGFSVVFFRDARILESISNVRHKDFDVPVINSSTAVAKAREQYGCGTLEYLEMEDQGGAGSAGSHIKMRNAQDELMAPASDAGYYSALTMAIFQDLGFYQADFSKAEEMPWGRNAGCAFLSEKCMEDGITKWPAMFCNENEVTMRCHTGRLSLGVCGLSSSDIPLPPYWQYFTDPLLAGISAFMDYCPVVVPFGDGSCAQRASEAGAPFKGFNVFSDAARCIDGAFRPKTTETVTNSYAGLCANVRCDTATRTYSVQVHGGSGYANCTPGLRVELSTVSSAFEEGGYITCPPYVEVCQGNVQAAKDGGNAAAGRRGPRAAATALLVAALLAVAL.

Positions 1 to 39 (MSVDSSSTHRHRSVAARLVRLAAAGAAVIAAVGTAAAWA) are cleaved as a signal peptide. Residues 40–87 (HAGAVQHRCIHDAMQARVRQSVARHHTAPGAVSAVGLSYVTLGAAPTV) constitute a propeptide, activation peptide. 2 cysteine pairs are disulfide-bonded: Cys-112–Cys-129 and Cys-178–Cys-217. His-251 contributes to the Zn(2+) binding site. Glu-252 is a catalytic residue. Position 255 (His-255) interacts with Zn(2+). An N-linked (GlcNAc...) asparagine glycan is attached at Asn-287. 7 disulfide bridges follow: Cys-301-Cys-373, Cys-380-Cys-443, Cys-393-Cys-412, Cys-402-Cys-477, Cys-454-Cys-498, Cys-503-Cys-553, and Cys-523-Cys-546. Position 321 (His-321) interacts with Zn(2+). Residue Asn-565 is the site of GPI-anchor amidated asparagine attachment. The propeptide at 566 to 590 (AAAGRRGPRAAATALLVAALLAVAL) is removed in mature form.

The protein belongs to the peptidase M8 family. The cofactor is Zn(2+).

It is found in the cell membrane. The catalysed reaction is Preference for hydrophobic residues at P1 and P1' and basic residues at P2' and P3'. A model nonapeptide is cleaved at -Ala-Tyr-|-Leu-Lys-Lys-.. Functionally, has an integral role during the infection of macrophages in the mammalian host. The protein is Leishmanolysin (gp63) of Leishmania donovani.